Reading from the N-terminus, the 195-residue chain is Small ribosomal subunit protein uS4c (195 aa).

Residues 82–143 (MRLDNILFRL…KQRSKALIQN (62 aa)) form the S4 RNA-binding domain.

It belongs to the universal ribosomal protein uS4 family. Part of the 30S ribosomal subunit. Contacts protein S5. The interaction surface between S4 and S5 is involved in control of translational fidelity.

Its subcellular location is the plastid. The protein resides in the chloroplast. In terms of biological role, one of the primary rRNA binding proteins, it binds directly to 16S rRNA where it nucleates assembly of the body of the 30S subunit. Functionally, with S5 and S12 plays an important role in translational accuracy. This chain is Small ribosomal subunit protein uS4c (rps4), found in Gladiolus murielae (Abyssinian gladiolus).